We begin with the raw amino-acid sequence, 855 residues long: Alanine--tRNA ligase (855 aa).

Histidine 555, histidine 559, cysteine 657, and histidine 661 together coordinate Zn(2+).

This sequence belongs to the class-II aminoacyl-tRNA synthetase family. Zn(2+) serves as cofactor.

It localises to the cytoplasm. It catalyses the reaction tRNA(Ala) + L-alanine + ATP = L-alanyl-tRNA(Ala) + AMP + diphosphate. In terms of biological role, catalyzes the attachment of alanine to tRNA(Ala) in a two-step reaction: alanine is first activated by ATP to form Ala-AMP and then transferred to the acceptor end of tRNA(Ala). Also edits incorrectly charged Ser-tRNA(Ala) and Gly-tRNA(Ala) via its editing domain. The sequence is that of Alanine--tRNA ligase from Wolinella succinogenes (strain ATCC 29543 / DSM 1740 / CCUG 13145 / JCM 31913 / LMG 7466 / NCTC 11488 / FDC 602W) (Vibrio succinogenes).